A 179-amino-acid polypeptide reads, in one-letter code: Inosine/xanthosine triphosphatase (179 aa).

Residue E71 coordinates Mg(2+). Residue 71–72 (EA) coordinates substrate.

It belongs to the YjjX NTPase family. As to quaternary structure, homodimer. Requires Mg(2+) as cofactor. It depends on Mn(2+) as a cofactor.

The enzyme catalyses XTP + H2O = XDP + phosphate + H(+). It carries out the reaction ITP + H2O = IDP + phosphate + H(+). In terms of biological role, phosphatase that hydrolyzes non-canonical purine nucleotides such as XTP and ITP to their respective diphosphate derivatives. Probably excludes non-canonical purines from DNA/RNA precursor pool, thus preventing their incorporation into DNA/RNA and avoiding chromosomal lesions. The polypeptide is Inosine/xanthosine triphosphatase (Shewanella sp. (strain MR-4)).